The following is a 128-amino-acid chain: 3-aminoacrylate deaminase RutC (128 aa).

Belongs to the RutC family.

The catalysed reaction is (Z)-3-aminoacrylate + H2O + H(+) = 3-oxopropanoate + NH4(+). In terms of biological role, involved in pyrimidine catabolism. Catalyzes the deamination of 3-aminoacrylate to malonic semialdehyde, a reaction that can also occur spontaneously. RutC may facilitate the reaction and modulate the metabolic fitness, rather than catalyzing essential functions. The protein is 3-aminoacrylate deaminase RutC of Azorhizobium caulinodans (strain ATCC 43989 / DSM 5975 / JCM 20966 / LMG 6465 / NBRC 14845 / NCIMB 13405 / ORS 571).